The chain runs to 335 residues: tRNA-splicing endonuclease (335 aa).

Residues Y269, H280, and K311 contribute to the active site.

The protein belongs to the tRNA-intron endonuclease family. Archaeal long subfamily. Homodimer.

The catalysed reaction is pretRNA = a 3'-half-tRNA molecule with a 5'-OH end + a 5'-half-tRNA molecule with a 2',3'-cyclic phosphate end + an intron with a 2',3'-cyclic phosphate and a 5'-hydroxyl terminus.. Endonuclease that removes tRNA introns. Cleaves pre-tRNA at the 5'- and 3'-splice sites to release the intron. The products are an intron and two tRNA half-molecules bearing 2',3' cyclic phosphate and 5'-OH termini. Recognizes a pseudosymmetric substrate in which 2 bulged loops of 3 bases are separated by a stem of 4 bp. This is tRNA-splicing endonuclease from Haloarcula marismortui (strain ATCC 43049 / DSM 3752 / JCM 8966 / VKM B-1809) (Halobacterium marismortui).